A 425-amino-acid polypeptide reads, in one-letter code: UPF0229 protein SG1344 (425 aa).

The tract at residues 49-109 (GESVSIPNTD…GQGSVSQDGE (61 aa)) is disordered. The segment covering 50–59 (ESVSIPNTDI) has biased composition (polar residues). The span at 77 to 90 (PGNDHFVQNDRIER) shows a compositional bias: basic and acidic residues.

This sequence belongs to the UPF0229 family.

The polypeptide is UPF0229 protein SG1344 (Sodalis glossinidius (strain morsitans)).